The following is a 101-amino-acid chain: Small ribosomal subunit protein uS14 (101 aa).

The protein belongs to the universal ribosomal protein uS14 family. As to quaternary structure, part of the 30S ribosomal subunit. Contacts proteins S3 and S10.

Binds 16S rRNA, required for the assembly of 30S particles and may also be responsible for determining the conformation of the 16S rRNA at the A site. This Brucella abortus (strain 2308) protein is Small ribosomal subunit protein uS14.